A 237-amino-acid polypeptide reads, in one-letter code: MTKLALIRHGQSAWNLENRFTGWWDADLTAQGEAEARHSGKLLAEVDADFRAGFTSVQTRAIRTMWLALTEMKRVWLPIEKDWHLNERHYGGLTGLNKAETAAKHGEDQVHVWRRSYDIPPPPLEVGSTFDLSTDPRYRGIDIPNTESLKTTLDRVLPYWQQKIAPGLIAGTDTMIAAHGNSLRALVKHLFNVPDETITGLEIPTGNPLLIELDPNLKPVSVRYLDAERAHSLPDLP.

Residues 8–15 (RHGQSAWN), 21–22 (TG), R60, 87–90 (ERHY), K98, 114–115 (RR), and 180–181 (GN) contribute to the substrate site. H9 (tele-phosphohistidine intermediate) is an active-site residue. The active-site Proton donor/acceptor is the E87.

Belongs to the phosphoglycerate mutase family. BPG-dependent PGAM subfamily. Homodimer.

The catalysed reaction is (2R)-2-phosphoglycerate = (2R)-3-phosphoglycerate. It functions in the pathway carbohydrate degradation; glycolysis; pyruvate from D-glyceraldehyde 3-phosphate: step 3/5. In terms of biological role, catalyzes the interconversion of 2-phosphoglycerate and 3-phosphoglycerate. In Hyphomonas neptunium (strain ATCC 15444), this protein is 2,3-bisphosphoglycerate-dependent phosphoglycerate mutase.